A 756-amino-acid chain; its full sequence is Lysyl oxidase homolog 4 (756 aa).

The N-terminal stretch at 1 to 24 (MAWSPPATLFLFLLLLGQPPPSRP) is a signal peptide. 4 consecutive SRCR domains span residues 32–133 (LRLV…VICH), 159–287 (VRLK…VSCV), 311–411 (VRLR…VRCN), and 421–529 (VRLA…VSCM). 17 disulfide bridges follow: cysteine 58–cysteine 122, cysteine 71–cysteine 132, cysteine 102–cysteine 112, cysteine 191–cysteine 276, cysteine 204–cysteine 286, cysteine 251–cysteine 261, cysteine 336–cysteine 400, cysteine 349–cysteine 410, cysteine 380–cysteine 390, cysteine 450–cysteine 515, cysteine 463–cysteine 528, cysteine 497–cysteine 507, cysteine 558–cysteine 564, cysteine 610–cysteine 658, cysteine 642–cysteine 648, cysteine 670–cysteine 680, and cysteine 717–cysteine 731. Asparagine 198 carries N-linked (GlcNAc...) asparagine glycosylation. Positions 533–736 (PDLVMNAQLV…WLHNCHTGNS (204 aa)) are lysyl-oxidase like. Residues histidine 611, histidine 613, and histidine 615 each contribute to the Cu cation site. Asparagine 629 carries an N-linked (GlcNAc...) asparagine glycan. The lysine tyrosylquinone (Lys-Tyr) cross-link spans 638 to 674 (KASFCLEDTNCPTGLQRRYACANFGEQGVTVGCWDTY). Tyrosine 674 bears the 2',4',5'-topaquinone mark.

Belongs to the lysyl oxidase family. It depends on Cu cation as a cofactor. Lysine tyrosylquinone residue is required as a cofactor. Post-translationally, the lysine tyrosylquinone cross-link (LTQ) is generated by condensation of the epsilon-amino group of a lysine with a topaquinone produced by oxidation of tyrosine. May be proteolytically cleaved by BMP1. In terms of tissue distribution, expressed in many tissues, the highest levels among the tissues studied being in the skeletal muscle, testis and pancreas. Expressed in cartilage.

The protein resides in the secreted. It is found in the extracellular space. The enzyme catalyses L-lysyl-[protein] + O2 + H2O = (S)-2-amino-6-oxohexanoyl-[protein] + H2O2 + NH4(+). With respect to regulation, inhibited by beta-aminopropionitrile (BAPN). In terms of biological role, catalyzes the oxidative deamination of lysine and hydroxylysine residues in collagen and elastin, resulting in the formation of covalent cross-linkages, and the stabilization of collagen and elastin fibers. The chain is Lysyl oxidase homolog 4 (LOXL4) from Homo sapiens (Human).